Reading from the N-terminus, the 444-residue chain is Adenine permease AdeQ (444 aa).

The Cytoplasmic segment spans residues 1-29 (MNNDNTDYVSNESGTLSRLFKLPQHGTTV). A helical membrane pass occupies residues 30 to 53 (RTELIAGMTTFLTMVYIVFVNPQI). At 54-63 (LGAAQMDPKV) the chain is on the periplasmic side. The chain crosses the membrane as a helical span at residues 64-82 (VFVTTCLIAGIGSIAMGIF). Topologically, residues 83 to 84 (AN) are cytoplasmic. The discontinuously helical transmembrane segment at 85–101 (LPVALAPAMGLNAFFAF) threads the bilayer. Residues 102 to 113 (VVVGAMGISWQT) lie on the Periplasmic side of the membrane. A helical transmembrane segment spans residues 114–133 (GMGAIFWGAVGLFLLTLFRI). The Cytoplasmic portion of the chain corresponds to 134–145 (RYWMISNIPLSL). Residues 146-166 (RIGITSGIGLFIALMGLKNTG) form a helical membrane-spanning segment. The Periplasmic portion of the chain corresponds to 167 to 182 (VIVANKDTLVMIGDLS). The chain crosses the membrane as a helical span at residues 183–200 (SHGVLLGILGFFIITVLS). The Cytoplasmic segment spans residues 201–204 (SRHF). Residues 205 to 223 (HAAVLVSIVVTSCCGLFFG) form a helical membrane-spanning segment. The Periplasmic segment spans residues 224 to 251 (DVHFSGVYSIPPDISGVIGEVDLSGALT). Residues 252-280 (LELAGIIFSFMLINLFDSSGTLIGVTDKA) form a helical membrane-spanning segment. Topologically, residues 281 to 293 (GLIDGNGKFPNMN) are cytoplasmic. Residues 294 to 309 (KALYVDSVSSVAGAFI) traverse the membrane as a helical segment. Residues 310-311 (GT) are Periplasmic-facing. Residues 312 to 327 (SSVTAYIESTSGVAVG) traverse the membrane as a discontinuously helical segment. Residues 328-331 (GRTG) are Cytoplasmic-facing. Residues 332–346 (LTAVVVGVMFLLVMF) traverse the membrane as a helical segment. The Periplasmic segment spans residues 347 to 357 (FSPLVAIVPPY). A helical transmembrane segment spans residues 358 to 377 (ATAGALIFVGVLMTSSLARV). The Cytoplasmic segment spans residues 378–382 (NWDDF). The discontinuously helical intramembrane region spans 383–418 (TESVPAFITTVMMPFTFSITEGIALGFMSYCIMKVC). Residues 419 to 444 (TGRWRDLNLCVVVVAALFALKIILVD) are Cytoplasmic-facing.

This sequence belongs to the nucleobase:cation symporter-2 (NCS2) (TC 2.A.40) family. Azg-like subfamily.

It is found in the cell inner membrane. Functionally, high-affinity transporter for adenine. The polypeptide is Adenine permease AdeQ (adeQ) (Escherichia coli (strain K12)).